Reading from the N-terminus, the 397-residue chain is Chorismate synthase (397 aa).

NADP(+) contacts are provided by Arg40 and Arg46. Residues 129–131 (RSS), 257–258 (QA), Gly302, 317–321 (KPISS), and Arg343 contribute to the FMN site.

The protein belongs to the chorismate synthase family. In terms of assembly, homotetramer. It depends on FMNH2 as a cofactor.

The enzyme catalyses 5-O-(1-carboxyvinyl)-3-phosphoshikimate = chorismate + phosphate. It functions in the pathway metabolic intermediate biosynthesis; chorismate biosynthesis; chorismate from D-erythrose 4-phosphate and phosphoenolpyruvate: step 7/7. Catalyzes the anti-1,4-elimination of the C-3 phosphate and the C-6 proR hydrogen from 5-enolpyruvylshikimate-3-phosphate (EPSP) to yield chorismate, which is the branch point compound that serves as the starting substrate for the three terminal pathways of aromatic amino acid biosynthesis. This reaction introduces a second double bond into the aromatic ring system. The protein is Chorismate synthase of Chlorobium phaeovibrioides (strain DSM 265 / 1930) (Prosthecochloris vibrioformis (strain DSM 265)).